The sequence spans 227 residues: Cytochrome c oxidase subunit 2 (227 aa).

Residues Met-1–Ser-14 are Mitochondrial intermembrane-facing. Residues Pro-15–Met-45 form a helical membrane-spanning segment. The Mitochondrial matrix portion of the chain corresponds to Leu-46–Gln-59. A helical transmembrane segment spans residues Glu-60–Met-87. Residues Asp-88–Val-227 lie on the Mitochondrial intermembrane side of the membrane. His-161, Cys-196, Glu-198, Cys-200, His-204, and Met-207 together coordinate Cu cation. Glu-198 contributes to the Mg(2+) binding site. Tyr-218 is modified (phosphotyrosine).

It belongs to the cytochrome c oxidase subunit 2 family. In terms of assembly, component of the cytochrome c oxidase (complex IV, CIV), a multisubunit enzyme composed of 14 subunits. The complex is composed of a catalytic core of 3 subunits MT-CO1, MT-CO2 and MT-CO3, encoded in the mitochondrial DNA, and 11 supernumerary subunits COX4I, COX5A, COX5B, COX6A, COX6B, COX6C, COX7A, COX7B, COX7C, COX8 and NDUFA4, which are encoded in the nuclear genome. The complex exists as a monomer or a dimer and forms supercomplexes (SCs) in the inner mitochondrial membrane with NADH-ubiquinone oxidoreductase (complex I, CI) and ubiquinol-cytochrome c oxidoreductase (cytochrome b-c1 complex, complex III, CIII), resulting in different assemblies (supercomplex SCI(1)III(2)IV(1) and megacomplex MCI(2)III(2)IV(2)). Found in a complex with TMEM177, COA6, COX18, COX20, SCO1 and SCO2. Interacts with TMEM177 in a COX20-dependent manner. Interacts with COX20. Interacts with COX16. Cu cation serves as cofactor.

The protein resides in the mitochondrion inner membrane. The catalysed reaction is 4 Fe(II)-[cytochrome c] + O2 + 8 H(+)(in) = 4 Fe(III)-[cytochrome c] + 2 H2O + 4 H(+)(out). In terms of biological role, component of the cytochrome c oxidase, the last enzyme in the mitochondrial electron transport chain which drives oxidative phosphorylation. The respiratory chain contains 3 multisubunit complexes succinate dehydrogenase (complex II, CII), ubiquinol-cytochrome c oxidoreductase (cytochrome b-c1 complex, complex III, CIII) and cytochrome c oxidase (complex IV, CIV), that cooperate to transfer electrons derived from NADH and succinate to molecular oxygen, creating an electrochemical gradient over the inner membrane that drives transmembrane transport and the ATP synthase. Cytochrome c oxidase is the component of the respiratory chain that catalyzes the reduction of oxygen to water. Electrons originating from reduced cytochrome c in the intermembrane space (IMS) are transferred via the dinuclear copper A center (CU(A)) of subunit 2 and heme A of subunit 1 to the active site in subunit 1, a binuclear center (BNC) formed by heme A3 and copper B (CU(B)). The BNC reduces molecular oxygen to 2 water molecules using 4 electrons from cytochrome c in the IMS and 4 protons from the mitochondrial matrix. The chain is Cytochrome c oxidase subunit 2 (MT-CO2) from Canis lupus familiaris (Dog).